A 240-amino-acid chain; its full sequence is Urease accessory protein UreF (240 aa).

The protein belongs to the UreF family. As to quaternary structure, ureD, UreF and UreG form a complex that acts as a GTP-hydrolysis-dependent molecular chaperone, activating the urease apoprotein by helping to assemble the nickel containing metallocenter of UreC. The UreE protein probably delivers the nickel.

The protein resides in the cytoplasm. Functionally, required for maturation of urease via the functional incorporation of the urease nickel metallocenter. This chain is Urease accessory protein UreF, found in Rhodopseudomonas palustris (strain TIE-1).